Consider the following 492-residue polypeptide: Adenylyltransferase and sulfurtransferase uba4 (492 aa).

Residues Gly-99, Asp-120, 127-131 (SNLHR), Lys-144, and 188-189 (DN) contribute to the ATP site. Positions 237 and 240 each coordinate Zn(2+). The Glycyl thioester intermediate; for adenylyltransferase activity role is filled by Cys-254. Residues Cys-317 and Cys-320 each coordinate Zn(2+). The Rhodanese domain maps to 378 to 490 (GSKEPTIIDV…WREQIDPDWP (113 aa)). Cys-445 acts as the Cysteine persulfide intermediate; for sulfurtransferase activity in catalysis.

The protein in the N-terminal section; belongs to the HesA/MoeB/ThiF family. UBA4 subfamily. Requires Zn(2+) as cofactor.

It is found in the cytoplasm. The protein localises to the cytosol. It catalyses the reaction [molybdopterin-synthase sulfur-carrier protein]-C-terminal Gly-Gly + ATP + H(+) = [molybdopterin-synthase sulfur-carrier protein]-C-terminal Gly-Gly-AMP + diphosphate. It carries out the reaction [molybdopterin-synthase sulfur-carrier protein]-C-terminal Gly-Gly-AMP + S-sulfanyl-L-cysteinyl-[cysteine desulfurase] + AH2 = [molybdopterin-synthase sulfur-carrier protein]-C-terminal-Gly-aminoethanethioate + L-cysteinyl-[cysteine desulfurase] + A + AMP + 2 H(+). It participates in tRNA modification; 5-methoxycarbonylmethyl-2-thiouridine-tRNA biosynthesis. It functions in the pathway cofactor biosynthesis; molybdopterin biosynthesis. Functionally, plays a central role in 2-thiolation of mcm(5)S(2)U at tRNA wobble positions of cytosolic tRNA(Lys), tRNA(Glu) and tRNA(Gln). Also essential during biosynthesis of the molybdenum cofactor. Acts by mediating the C-terminal thiocarboxylation of sulfur carriers urm1 and mocs2a. Its N-terminus first activates urm1 and mocs2a as acyl-adenylates (-COAMP), then the persulfide sulfur on the catalytic cysteine is transferred to urm1 and mocs2a to form thiocarboxylation (-COSH) of their C-terminus. The reaction probably involves hydrogen sulfide that is generated from the persulfide intermediate and that acts as a nucleophile towards urm1 and mocs2a. Subsequently, a transient disulfide bond is formed. Does not use thiosulfate as sulfur donor; nfs1 probably acting as a sulfur donor for thiocarboxylation reactions. The chain is Adenylyltransferase and sulfurtransferase uba4 from Aspergillus clavatus (strain ATCC 1007 / CBS 513.65 / DSM 816 / NCTC 3887 / NRRL 1 / QM 1276 / 107).